Here is a 292-residue protein sequence, read N- to C-terminus: Phosphoribulokinase, plasmid (292 aa).

ATP is bound at residue 12 to 20; that stretch reads GSSGAGTTS.

Belongs to the phosphoribulokinase family. Homooctamer.

It carries out the reaction D-ribulose 5-phosphate + ATP = D-ribulose 1,5-bisphosphate + ADP + H(+). It participates in carbohydrate biosynthesis; Calvin cycle. This is Phosphoribulokinase, plasmid (cfxP) from Cupriavidus necator (strain ATCC 17699 / DSM 428 / KCTC 22496 / NCIMB 10442 / H16 / Stanier 337) (Ralstonia eutropha).